The sequence spans 286 residues: 4-hydroxy-3-methylbut-2-enyl diphosphate reductase (286 aa).

Cys-12 lines the [4Fe-4S] cluster pocket. (2E)-4-hydroxy-3-methylbut-2-enyl diphosphate contacts are provided by His-47 and His-80. Positions 47 and 80 each coordinate dimethylallyl diphosphate. Isopentenyl diphosphate contacts are provided by His-47 and His-80. Cys-102 lines the [4Fe-4S] cluster pocket. (2E)-4-hydroxy-3-methylbut-2-enyl diphosphate is bound at residue His-130. His-130 contributes to the dimethylallyl diphosphate binding site. His-130 serves as a coordination point for isopentenyl diphosphate. Residue Glu-132 is the Proton donor of the active site. Thr-170 provides a ligand contact to (2E)-4-hydroxy-3-methylbut-2-enyl diphosphate. Cys-198 contacts [4Fe-4S] cluster. Residues Ser-226, Asn-228, and Ser-270 each coordinate (2E)-4-hydroxy-3-methylbut-2-enyl diphosphate. Dimethylallyl diphosphate is bound by residues Ser-226, Asn-228, and Ser-270. Positions 226, 228, and 270 each coordinate isopentenyl diphosphate.

The protein belongs to the IspH family. Requires [4Fe-4S] cluster as cofactor.

It carries out the reaction isopentenyl diphosphate + 2 oxidized [2Fe-2S]-[ferredoxin] + H2O = (2E)-4-hydroxy-3-methylbut-2-enyl diphosphate + 2 reduced [2Fe-2S]-[ferredoxin] + 2 H(+). It catalyses the reaction dimethylallyl diphosphate + 2 oxidized [2Fe-2S]-[ferredoxin] + H2O = (2E)-4-hydroxy-3-methylbut-2-enyl diphosphate + 2 reduced [2Fe-2S]-[ferredoxin] + 2 H(+). Its pathway is isoprenoid biosynthesis; dimethylallyl diphosphate biosynthesis; dimethylallyl diphosphate from (2E)-4-hydroxy-3-methylbutenyl diphosphate: step 1/1. The protein operates within isoprenoid biosynthesis; isopentenyl diphosphate biosynthesis via DXP pathway; isopentenyl diphosphate from 1-deoxy-D-xylulose 5-phosphate: step 6/6. Catalyzes the conversion of 1-hydroxy-2-methyl-2-(E)-butenyl 4-diphosphate (HMBPP) into a mixture of isopentenyl diphosphate (IPP) and dimethylallyl diphosphate (DMAPP). Acts in the terminal step of the DOXP/MEP pathway for isoprenoid precursor biosynthesis. This chain is 4-hydroxy-3-methylbut-2-enyl diphosphate reductase, found in Desulfovibrio desulfuricans (strain ATCC 27774 / DSM 6949 / MB).